We begin with the raw amino-acid sequence, 512 residues long: Zinc metalloprotease mde10 (512 aa).

The signal sequence occupies residues 1–15 (MRLVLLFSCVLAVSS). N-linked (GlcNAc...) asparagine glycosylation is present at asparagine 35. Residues 65 to 306 (QTLWIGVVAD…KYVSLSCLSK (242 aa)) form the Peptidase M12B domain. Histidine 229 lines the Zn(2+) pocket. Glutamate 230 is an active-site residue. Positions 233 and 239 each coordinate Zn(2+). Cystine bridges form between cysteine 246/cysteine 254 and cysteine 374/cysteine 394. The region spanning 315–402 (LGTCGNGIVE…KCPVDENWDD (88 aa)) is the Disintegrin domain. N-linked (GlcNAc...) asparagine glycosylation occurs at asparagine 432.

Zn(2+) serves as cofactor. Glycosylated.

Its subcellular location is the endoplasmic reticulum. The protein resides in the spore wall. Has a role in the development of the spore envelope. In Schizosaccharomyces pombe (strain 972 / ATCC 24843) (Fission yeast), this protein is Zinc metalloprotease mde10 (mde10).